The primary structure comprises 447 residues: Gustatory receptor family protein 3 (447 aa).

The Extracellular segment spans residues 1–69 (MTITASNTLE…HTHSSARNTM (69 aa)). The chain crosses the membrane as a helical span at residues 70–90 (FKWPLTIYNYLTLAILTAATI). Residues 91–116 (RRISQIKQKSATNEEKDAAFHVLNPT) lie on the Cytoplasmic side of the membrane. A helical membrane pass occupies residues 117–137 (FVLTLCHALLMFSGLAAGFLL). Topologically, residues 138–171 (LKLQKQREKMYHVLDQGLGRNRNEEHDSHHFKLN) are extracellular. Residues 172–192 (KLFISISFSFAAALSFVQIAT) traverse the membrane as a helical segment. Topologically, residues 193-211 (KMRYLDLPDTPDLINRKIY) are cytoplasmic. Residues 212-232 (FVILEGYVIFIASSCISLVAI) form a helical membrane-spanning segment. Over 233–292 (LFFQLCRILQFSIGQLIEEMVPKEKEECPLPEQSLQQIHDVQIHYQEISNAKLYIEQNFS) the chain is Extracellular. Residues 293 to 313 (FSLFYTYGCCIPLTCLLGYIA) traverse the membrane as a helical segment. The Cytoplasmic portion of the chain corresponds to 314–328 (FRNGIQADMAETFSV). The helical transmembrane segment at 329-349 (AIWLTNTMLALMLFSIPAFMI) threads the bilayer. The Extracellular portion of the chain corresponds to 350–405 (AEEGDKLLTASFKMYHETLCEERDLLVLSQMSFLSFQMHATKLTLTAGNFFMMNRK). A helical membrane pass occupies residues 406–426 (IMISLFSAIFTYFLILVQFDA). The Cytoplasmic portion of the chain corresponds to 427-447 (EKERAGECNNQSRVLIVQPPV).

The protein belongs to the insect chemoreceptor superfamily. Gustatory receptor (GR) family. Expressed in I2 pharyngeal neurons.

The protein localises to the membrane. In terms of biological role, chemoreceptor involved in light-induced avoidance behavior. Probably acts as a molecular sensor in I2 pharyngeal neurons, required for the inhibition of feeding in response to light and hydrogen peroxide. Involved in circadian rhythms, probably by acting as a light sensor. In contrast to lite-1, does not act as a photoreceptor. This is Gustatory receptor family protein 3 from Caenorhabditis elegans.